The primary structure comprises 244 residues: Large ribosomal subunit protein uL3 (244 aa).

This sequence belongs to the universal ribosomal protein uL3 family. In terms of assembly, part of the 50S ribosomal subunit. Forms a cluster with proteins L14 and L19.

One of the primary rRNA binding proteins, it binds directly near the 3'-end of the 23S rRNA, where it nucleates assembly of the 50S subunit. The protein is Large ribosomal subunit protein uL3 of Aquifex pyrophilus.